The sequence spans 126 residues: Holo-[acyl-carrier-protein] synthase (126 aa).

Residues aspartate 9 and glutamate 58 each coordinate Mg(2+).

The protein belongs to the P-Pant transferase superfamily. AcpS family. Mg(2+) serves as cofactor.

The protein localises to the cytoplasm. The enzyme catalyses apo-[ACP] + CoA = holo-[ACP] + adenosine 3',5'-bisphosphate + H(+). Its function is as follows. Transfers the 4'-phosphopantetheine moiety from coenzyme A to a Ser of acyl-carrier-protein. This chain is Holo-[acyl-carrier-protein] synthase, found in Photorhabdus laumondii subsp. laumondii (strain DSM 15139 / CIP 105565 / TT01) (Photorhabdus luminescens subsp. laumondii).